Here is a 468-residue protein sequence, read N- to C-terminus: Putative BTB/POZ domain and WD-repeat protein R154 (468 aa).

Residues 14–85 (SDLQLIVEDS…FYGIDDKLPE (72 aa)) form the BTB domain. WD repeat units follow at residues 194–233 (HHSENITSLCYDNNNKRIIYGDLKGTIYAYDFFSNKIIFN), 354–398 (DEIG…LVKS), and 401–440 (LFDVPIISMTYSPNGDQLIVANCDREVRILNSDNYEIIYT).

The protein belongs to the mimivirus BTB/WD family.

This is Putative BTB/POZ domain and WD-repeat protein R154 from Acanthamoeba polyphaga (Amoeba).